The primary structure comprises 287 residues: MTESDSADARLLTPADVRRLAAQLGIRPTKTLGQNFVIDPGTVRRIVRAAQVSPDDVVVEVGPGLGSLTLALLPHVRHVTAVEIDPRLAEALPGTVADHAPAYAHRLRVVTADALRITELPDPQPTALVANLPYNVAVPVVLHLLNLLPSLEHGLVMVQAEVAERLAARPGDRAYGAPSAKIAWYADVRRAGAIGRTVFWPVPNVDSGLVALRRRPAPPTKASREDVFAVVDAAFAQRRKTLRAALSSWAGSAAAAEAALRSAGVDPRSRGETLGIADFARIAEHRP.

S-adenosyl-L-methionine is bound by residues Asn35, Val37, Gly62, Glu83, Asp113, and Asn131.

Belongs to the class I-like SAM-binding methyltransferase superfamily. rRNA adenine N(6)-methyltransferase family. RsmA subfamily.

It localises to the cytoplasm. It carries out the reaction adenosine(1518)/adenosine(1519) in 16S rRNA + 4 S-adenosyl-L-methionine = N(6)-dimethyladenosine(1518)/N(6)-dimethyladenosine(1519) in 16S rRNA + 4 S-adenosyl-L-homocysteine + 4 H(+). Its function is as follows. Specifically dimethylates two adjacent adenosines (A1518 and A1519) in the loop of a conserved hairpin near the 3'-end of 16S rRNA in the 30S particle. May play a critical role in biogenesis of 30S subunits. The protein is Ribosomal RNA small subunit methyltransferase A of Thermobifida fusca (strain YX).